Reading from the N-terminus, the 337-residue chain is MRAVFIQGAEEHPAAFCYQVNGSCPRTVHTLGIQLVIYLACAAGMLIIVLGNVFVAFAVSYFKALHTPTNFLLLSLALADMFLGLLVLPLSTIRSVESCWFFGDFLCRLHTYLDTLFCLTSIFHLCFISIDRHCAICDPLLYPSKFTVRVALRYILAGWGVPAAYTSLFLYTDVVETRLSQWLEEMPCVGSCQLLLNKFWGWLNFPLFFVPCLIMISLYVKIFVVATRQAQQITTLSKSLAGAAKHERKAAKTLGIAVGIYLLCWLPFTIDTMVDSLLHFITPPLVFDIFIWFAYFNSACNPIIYVFSYQWFRKALKLTLSQKVFSPQTRTVDLYQE.

Topologically, residues methionine 1–glutamine 34 are extracellular. Asparagine 21 is a glycosylation site (N-linked (GlcNAc...) asparagine). Cystine bridges form between cysteine 24-cysteine 188 and cysteine 99-cysteine 192. Residues leucine 35 to valine 55 form a helical membrane-spanning segment. Over alanine 56–asparagine 70 the chain is Cytoplasmic. Residues phenylalanine 71–serine 91 traverse the membrane as a helical segment. At threonine 92 to leucine 109 the chain is on the extracellular side. A helical transmembrane segment spans residues histidine 110 to isoleucine 130. At aspartate 131–tyrosine 154 the chain is on the cytoplasmic side. Residues isoleucine 155 to valine 175 form a helical membrane-spanning segment. Residues glutamate 176–valine 189 form an extracellular Loop 2 (ECL2) region. Residues glutamate 176–asparagine 204 are Extracellular-facing. Residues phenylalanine 205 to valine 225 traverse the membrane as a helical segment. The Cytoplasmic segment spans residues alanine 226–threonine 253. Residues leucine 254–valine 274 traverse the membrane as a helical segment. Over aspartate 275–proline 284 the chain is Extracellular. A helical membrane pass occupies residues leucine 285–phenylalanine 307. Residues serine 308–glutamate 337 lie on the Cytoplasmic side of the membrane.

Belongs to the G-protein coupled receptor 1 family. In terms of tissue distribution, expressed almost exclusively in skeletal muscle and selected areas of the brain, such amygdala, hippocampus, caudate nucleus, thalamus and hypothalamus. Weak expression is also find in substantia nigra.

It localises to the cell membrane. Functionally, olfactory receptor specific for trimethylamine, a trace amine. Also activated at lower level by dimethylethylamine. Trimethylamine is a bacterial metabolite found in some animal odors, and to humans it is a repulsive odor associated with bad breath and spoiled food. Trimethylamine-binding causes a conformation change that triggers signaling via G(s)-class of G alpha proteins (GNAL or GNAS). In Homo sapiens (Human), this protein is Trace amine-associated receptor 5.